The sequence spans 139 residues: Putative nickel-responsive regulator (139 aa).

Ni(2+)-binding residues include H79, H90, H92, and C98.

The protein belongs to the transcriptional regulatory CopG/NikR family. It depends on Ni(2+) as a cofactor.

Transcriptional regulator. The sequence is that of Putative nickel-responsive regulator from Geobacter metallireducens (strain ATCC 53774 / DSM 7210 / GS-15).